The chain runs to 130 residues: MAENQNYGTGRRKSSSARVFIKPGSGKITINQRELDVYFGRETARMVVRQPLELVELTDKLDLYITVKGGGISGQAGAIRHGITRALMEYDETLRPALRAAGFVTRDARRVERKKVGLHKARRRPQYSKR.

This sequence belongs to the universal ribosomal protein uS9 family.

The protein is Small ribosomal subunit protein uS9 of Haemophilus influenzae (strain 86-028NP).